A 305-amino-acid polypeptide reads, in one-letter code: Methionyl-tRNA formyltransferase (305 aa).

108–111 provides a ligand contact to (6S)-5,6,7,8-tetrahydrofolate; the sequence is SLLP.

The protein belongs to the Fmt family.

It carries out the reaction L-methionyl-tRNA(fMet) + (6R)-10-formyltetrahydrofolate = N-formyl-L-methionyl-tRNA(fMet) + (6S)-5,6,7,8-tetrahydrofolate + H(+). Its function is as follows. Attaches a formyl group to the free amino group of methionyl-tRNA(fMet). The formyl group appears to play a dual role in the initiator identity of N-formylmethionyl-tRNA by promoting its recognition by IF2 and preventing the misappropriation of this tRNA by the elongation apparatus. This chain is Methionyl-tRNA formyltransferase, found in Thermus thermophilus (strain ATCC BAA-163 / DSM 7039 / HB27).